Reading from the N-terminus, the 355-residue chain is Peptide chain release factor 1 (355 aa).

Gln233 carries the post-translational modification N5-methylglutamine. Over residues 280-293 the composition is skewed to basic and acidic residues; that stretch reads ERRKKEQERADSRR. The disordered stretch occupies residues 280–308; it reads ERRKKEQERADSRRGQVGSGDRSERIRTY.

It belongs to the prokaryotic/mitochondrial release factor family. In terms of processing, methylated by PrmC. Methylation increases the termination efficiency of RF1.

The protein resides in the cytoplasm. In terms of biological role, peptide chain release factor 1 directs the termination of translation in response to the peptide chain termination codons UAG and UAA. The chain is Peptide chain release factor 1 from Rickettsia felis (strain ATCC VR-1525 / URRWXCal2) (Rickettsia azadi).